We begin with the raw amino-acid sequence, 171 residues long: MEELKSIIRDIPDFPKKGIIFKDITTLLSDAASYQRMIDLLSHRYIGKRIDKVVGVEARGFIIGAALAYKLGAGIVLVRKPGKLPSETFKKTYDLEYGTDTLEMHTDAIKKGERVLIADDLLATGGTMSAVVDMVDSMGGELVECCFMAELEFLNGRTKLPVERVFSLLKF.

This sequence belongs to the purine/pyrimidine phosphoribosyltransferase family. Homodimer.

The protein resides in the cytoplasm. It carries out the reaction AMP + diphosphate = 5-phospho-alpha-D-ribose 1-diphosphate + adenine. It participates in purine metabolism; AMP biosynthesis via salvage pathway; AMP from adenine: step 1/1. Functionally, catalyzes a salvage reaction resulting in the formation of AMP, that is energically less costly than de novo synthesis. This Geotalea daltonii (strain DSM 22248 / JCM 15807 / FRC-32) (Geobacter daltonii) protein is Adenine phosphoribosyltransferase.